We begin with the raw amino-acid sequence, 259 residues long: Probable metal transport system ATP-binding protein TC_0339 (259 aa).

Residues 9–241 (WAVDDLCVNY…AIFQAYGCEL (233 aa)) enclose the ABC transporter domain. 41 to 48 (GPNGAGKS) lines the ATP pocket.

Belongs to the ABC transporter superfamily.

It localises to the cell inner membrane. Functionally, part of an ATP-driven transport system TC_0338/TC_0339/TC_0341/TC_0342 for a metal. Probably responsible for energy coupling to the transport system. This Chlamydia muridarum (strain MoPn / Nigg) protein is Probable metal transport system ATP-binding protein TC_0339.